The following is a 638-amino-acid chain: Pentatricopeptide repeat-containing protein At3g49730 (638 aa).

12 PPR repeats span residues 130 to 164 (SYEV…NPEL), 166 to 200 (EPEL…GLEP), 201 to 231 (DEYV…MREK), 235 to 269 (NLRY…GLEP), 270 to 304 (DIVV…GFEP), 305 to 340 (NVNC…GCEA), 341 to 375 (DIVT…GVMP), 376 to 410 (SQVT…GCHP), 411 to 445 (DLLI…GLSP), 446 to 480 (GVDT…GIFS), 483 to 513 (QYGT…ISNK), and 520 to 554 (NVSA…DLMP). The segment at 604–638 (LIEKAKPKGNKEGKKKGTDHQRYKGRGERSRAKAL) is disordered.

This sequence belongs to the PPR family. P subfamily.

This Arabidopsis thaliana (Mouse-ear cress) protein is Pentatricopeptide repeat-containing protein At3g49730.